Consider the following 423-residue polypeptide: FVKNSGICETTPGVNQYSGYLSVGSNMNMWFWFFEARNNPQQAPLAAWFNGGPGCSSMIGLFQENGPCHFVNGDSTPSLNENSWNNYANMIYIDQPIGVGFSYGTDDVTSTVTAAPYVWNLLQAFYAQRPEYESRDFAIFTESYGGHYGPEFASYIEQQNAAIKAGSVTGQNVNIVALGVNNGWIDSTIQEKAYIDFSYNNSYQQIIDSSTRDSLLDAYNNQCLPALQQCSQSGSTSDCTNADSVCYQNIEGPISSSGDFDVYDIREPSNDPYPPKTYSTYLSDPTVVKAIGARTNYQECPNGPYNKFASTGDNPRSFLSTLSSVVQSGINVLVWAGDADWICNWLGNYEVANAVDFPGNAQFSALDLAPYTVNGVEKGQFKTVDNFSFLKVYGAGHEVPYYQPDTALQAFKQIIQKKPISST.

Disulfide bonds link C8–C68, C55–C300, C223–C246, and C230–C239. Residue S143 is part of the active site. Residue N200 is glycosylated (N-linked (GlcNAc...) asparagine). The active site involves D340. C343 is a substrate binding site. H397 is an active-site residue. A substrate-binding site is contributed by E398.

Belongs to the peptidase S10 family.

It catalyses the reaction Preferential release of a C-terminal arginine or lysine residue.. The polypeptide is Carboxypeptidase S1 (Penicillium janthinellum (Penicillium vitale)).